A 115-amino-acid polypeptide reads, in one-letter code: Large ribosomal subunit protein bL20c (115 aa).

It belongs to the bacterial ribosomal protein bL20 family.

It localises to the plastid. It is found in the chloroplast. Binds directly to 23S ribosomal RNA and is necessary for the in vitro assembly process of the 50S ribosomal subunit. It is not involved in the protein synthesizing functions of that subunit. In Pleurastrum terricola (Filamentous green alga), this protein is Large ribosomal subunit protein bL20c.